A 790-amino-acid chain; its full sequence is Pentatricopeptide repeat-containing protein At1g25360 (790 aa).

PPR repeat units lie at residues 48 to 82 (RAHILNRLIDVYCKSSELNYARQLFDEISEPDKIA), 84 to 109 (TTMVSGYCASGDITLARGVFEKAPVC), 112 to 146 (DTVMYNAMITGFSHNNDGYSAINLFCKMKHEGFKP), 147 to 182 (DNFTFASVLAGLALVADDEKQCVQFHAAALKSGAGY), 183 to 217 (ITSVSNALVSVYSKCASSPSLLHSARKVFDEILEK), 218 to 248 (DERSWTTMMTGYVKNGYFDLGEELLEGMDDN), 250 to 284 (KLVAYNAMISGYVNRGFYQEALEMVRRMVSSGIEL), 285 to 315 (DEFTYPSVIRACATAGLLQLGKQVHAYVLRR), 319 to 349 (SFHFDNSLVSLYYKCGKFDEARAIFEKMPAK), 350 to 384 (DLVSWNALLSGYVSSGHIGEAKLIFKEMKEKNILS), 385 to 415 (WMIMISGLAENGFGEEGLKLFSCMKREGFEP), 416 to 450 (CDYAFSGAIKSCAVLGAYCNGQQYHAQLLKIGFDS), 451 to 481 (SLSAGNALITMYAKCGVVEEARQVFRTMPCL), 482 to 516 (DSVSWNALIAALGQHGHGAEAVDVYEEMLKKGIRP), 517 to 551 (DRITLLTVLTACSHAGLVDQGRKYFDSMETVYRIP), and 553 to 583 (GADHYARLIDLLCRSGKFSDAESVIESLPFK). Residues 588–663 (IWEALLSGCR…EVACSWIEME (76 aa)) form a type E motif region. Residues 664-694 (TQVHTFLVDDTSHPEAEAVYIYLQDLGKEMR) are type E(+) motif. The type DYW motif stretch occupies residues 695–790 (RLGYVPDTSF…NGECSCGNFW (96 aa)).

The protein belongs to the PPR family. PCMP-H subfamily.

The polypeptide is Pentatricopeptide repeat-containing protein At1g25360 (PCMP-H74) (Arabidopsis thaliana (Mouse-ear cress)).